A 307-amino-acid polypeptide reads, in one-letter code: ATP synthase gamma chain (307 aa).

It belongs to the ATPase gamma chain family. As to quaternary structure, F-type ATPases have 2 components, CF(1) - the catalytic core - and CF(0) - the membrane proton channel. CF(1) has five subunits: alpha(3), beta(3), gamma(1), delta(1), epsilon(1). CF(0) has three main subunits: a, b and c.

The protein localises to the cell membrane. Functionally, produces ATP from ADP in the presence of a proton gradient across the membrane. The gamma chain is believed to be important in regulating ATPase activity and the flow of protons through the CF(0) complex. The protein is ATP synthase gamma chain of Bifidobacterium longum subsp. infantis (strain ATCC 15697 / DSM 20088 / JCM 1222 / NCTC 11817 / S12).